The primary structure comprises 819 residues: Ent-beyerene synthase KSL2, chloroplastic (819 aa).

The transit peptide at 1–58 directs the protein to the chloroplast; that stretch reads MLPCLFPAYGSVVACKPSAIDRSPFGLLSQPKQTNRTLIRRPKVTKAFMAIEAMRHCS. The segment covering 58–76 has biased composition (low complexity); that stretch reads SSSSSSEEGGAAATTAARS. Residues 58–77 are disordered; it reads SSSSSSEEGGAAATTAARSA. Mg(2+) contacts are provided by aspartate 567, aspartate 571, asparagine 711, serine 715, and glutamate 719. Residues 567 to 571 carry the DDXXD motif motif; the sequence is DDFFD.

Belongs to the terpene synthase family. The cofactor is Mg(2+). As to expression, expressed in roots. Highly expressed in stems, flowers and panicle.

It is found in the plastid. Its subcellular location is the chloroplast. It carries out the reaction ent-copalyl diphosphate = ent-beyerene + diphosphate. The enzyme catalyses ent-copalyl diphosphate = ent-kaur-16-ene + diphosphate. Its pathway is secondary metabolite biosynthesis; terpenoid biosynthesis. Diterpene cyclase involved in jasmonic acid-dependent defense mechanisms in roots by mediating the biosynthesis of labdane-related diterpenoids (LRDs) natural products such as ent-beyerene, an antimicrobial compound. Catalyzes the cyclization of ent-CDP into ent-beyerene as a major and ent-kaurene as a minor product. May be involved in the catalysis of an early step of the gibberellin (GA) biosynthesis pathway. In Oryza sativa subsp. japonica (Rice), this protein is Ent-beyerene synthase KSL2, chloroplastic.